We begin with the raw amino-acid sequence, 603 residues long: DNA mismatch repair protein MutL (603 aa).

This sequence belongs to the DNA mismatch repair MutL/HexB family.

This protein is involved in the repair of mismatches in DNA. It is required for dam-dependent methyl-directed DNA mismatch repair. May act as a 'molecular matchmaker', a protein that promotes the formation of a stable complex between two or more DNA-binding proteins in an ATP-dependent manner without itself being part of a final effector complex. The sequence is that of DNA mismatch repair protein MutL from Sphingopyxis alaskensis (strain DSM 13593 / LMG 18877 / RB2256) (Sphingomonas alaskensis).